Reading from the N-terminus, the 546-residue chain is Chaperonin GroEL (546 aa).

ATP is bound by residues 29-32 (TMGP), K50, 86-90 (DGTTT), G414, and D492.

This sequence belongs to the chaperonin (HSP60) family. As to quaternary structure, forms a cylinder of 14 subunits composed of two heptameric rings stacked back-to-back. Interacts with the co-chaperonin GroES.

It localises to the cytoplasm. The catalysed reaction is ATP + H2O + a folded polypeptide = ADP + phosphate + an unfolded polypeptide.. Its function is as follows. Together with its co-chaperonin GroES, plays an essential role in assisting protein folding. The GroEL-GroES system forms a nano-cage that allows encapsulation of the non-native substrate proteins and provides a physical environment optimized to promote and accelerate protein folding. The sequence is that of Chaperonin GroEL from Helicobacter pylori (strain HPAG1).